Here is a 434-residue protein sequence, read N- to C-terminus: Guanosine-inosine kinase (434 aa).

GMP contacts are provided by residues 40-45 (DQTLVD), 93-97 (GTIGN), and Arg198. Residues 284–289 (TAGPIG), Gly357, and Asn402 each bind ATP.

This sequence belongs to the carbohydrate kinase PfkB family. Mg(2+) serves as cofactor.

It carries out the reaction guanosine + ATP = GMP + ADP + H(+). It catalyses the reaction inosine + ATP = IMP + ADP + H(+). The protein operates within purine metabolism; IMP biosynthesis via salvage pathway; IMP from inosine: step 1/1. It participates in purine metabolism; GMP biosynthesis via salvage pathway. Catalyzes the phosphorylation of guanosine and inosine to GMP and IMP, respectively. The polypeptide is Guanosine-inosine kinase (Escherichia coli O157:H7).